A 149-amino-acid chain; its full sequence is Heavy metal-associated isoprenylated plant protein 21 (149 aa).

The HMA domain maps to 25-88 (LQTVDIKVKM…RVKSTGKKAE (64 aa)). A metal cation-binding residues include Cys-36 and Cys-39. Cys-146 is modified (cysteine methyl ester). A lipid anchor (S-farnesyl cysteine) is attached at Cys-146. Residues 147-149 (SIM) constitute a propeptide, removed in mature form.

Belongs to the HIPP family. In terms of assembly, interacts with ZHD11/HB29. In terms of tissue distribution, expressed at low levels in leaves and sepals.

Its subcellular location is the membrane. In terms of biological role, heavy-metal-binding protein. Binds cadmium. May be involved in cadmium transport and play a role in cadmium detoxification. The protein is Heavy metal-associated isoprenylated plant protein 21 of Arabidopsis thaliana (Mouse-ear cress).